A 220-amino-acid polypeptide reads, in one-letter code: FMN-dependent NADH:quinone oxidoreductase (220 aa).

FMN is bound by residues Ser10, 17–19 (SAS), and 136–139 (SRGG). Positions 200 to 220 (HSEAVTKAKELTERLTADNGR) are disordered.

It belongs to the azoreductase type 1 family. In terms of assembly, homodimer. Requires FMN as cofactor.

The catalysed reaction is 2 a quinone + NADH + H(+) = 2 a 1,4-benzosemiquinone + NAD(+). The enzyme catalyses N,N-dimethyl-1,4-phenylenediamine + anthranilate + 2 NAD(+) = 2-(4-dimethylaminophenyl)diazenylbenzoate + 2 NADH + 2 H(+). Functionally, quinone reductase that provides resistance to thiol-specific stress caused by electrophilic quinones. In terms of biological role, also exhibits azoreductase activity. Catalyzes the reductive cleavage of the azo bond in aromatic azo compounds to the corresponding amines. In Streptomyces coelicolor (strain ATCC BAA-471 / A3(2) / M145), this protein is FMN-dependent NADH:quinone oxidoreductase.